We begin with the raw amino-acid sequence, 360 residues long: MVPPTAIAEASRSGGEPAIKDPVKDTILTPRFYTTDFEAMAAMDLRPNQEELEAICEEFRKDYNRHHFVRNEAFDGAADKLDPETRRVFVEFLEQSCTSEFSGFLLYKELSRRIKQKNPLLAECFAHMARDEARHAGFLNKAMGDFGVQLDLGFLTANKAYTFFKPKFIFYATYLSEKIGYWRYIAIYRHLEQNPDSKIFPIFNFFENWCQDENRHGDFFDALMKAQPSSVRGLQARLWCRFFLLAVFATMYVRDVARKEFYEALGLDAREYDKYVIAKTNETSARVFPVVLNVDHPKFYERLERIVGNNNALSQADASGASAPVRLLRKLPFWGANALEMAKLFFAAPIRSENYQPAIR.

A disordered region spans residues 1-20; sequence MVPPTAIAEASRSGGEPAIK.

It belongs to the AcsF family. Fe cation is required as a cofactor.

It catalyses the reaction Mg-protoporphyrin IX 13-monomethyl ester + 3 NADPH + 3 O2 + 2 H(+) = 3,8-divinyl protochlorophyllide a + 3 NADP(+) + 5 H2O. It functions in the pathway porphyrin-containing compound metabolism; chlorophyll biosynthesis (light-independent). Catalyzes the formation of the isocyclic ring in chlorophyll biosynthesis. Mediates the cyclase reaction, which results in the formation of divinylprotochlorophyllide (Pchlide) characteristic of all chlorophylls from magnesium-protoporphyrin IX 13-monomethyl ester (MgPMME). This chain is Magnesium-protoporphyrin IX monomethyl ester [oxidative] cyclase, found in Synechococcus sp. (strain RCC307).